Here is a 477-residue protein sequence, read N- to C-terminus: Endoglucanase A (477 aa).

A signal peptide spans Met1–Ala32. Glu95 acts as the Proton donor in catalysis. The Nucleophile role is filled by Asp152. In terms of domain architecture, Dockerin spans Pro411–Tyr477.

The protein belongs to the glycosyl hydrolase 8 (cellulase D) family.

It carries out the reaction Endohydrolysis of (1-&gt;4)-beta-D-glucosidic linkages in cellulose, lichenin and cereal beta-D-glucans.. Its function is as follows. This enzyme catalyzes the endohydrolysis of 1,4-beta-glucosidic linkages in cellulose, lichenin and cereal beta-D-glucans. The protein is Endoglucanase A (celA) of Acetivibrio thermocellus (strain ATCC 27405 / DSM 1237 / JCM 9322 / NBRC 103400 / NCIMB 10682 / NRRL B-4536 / VPI 7372) (Clostridium thermocellum).